The primary structure comprises 681 residues: Epithelial splicing regulatory protein 1 (681 aa).

RRM domains follow at residues 225 to 302, 326 to 406, and 445 to 525; these read TVVR…KATG, VIVR…RSTA, and DCIR…QCSA. Ser543 is subject to Phosphoserine. At Arg582 the chain carries Omega-N-methylarginine.

Belongs to the ESRP family. In terms of tissue distribution, epithelial cell-specific.

It is found in the nucleus. Its function is as follows. mRNA splicing factor that regulates the formation of epithelial cell-specific isoforms. Specifically regulates the expression of FGFR2-IIIb, an epithelial cell-specific isoform of FGFR2. Also regulates the splicing of CD44, CTNND1, ENAH, 3 transcripts that undergo changes in splicing during the epithelial-to-mesenchymal transition (EMT). Acts by directly binding specific sequences in mRNAs. Binds the GU-rich sequence motifs in the ISE/ISS-3, a cis-element regulatory region present in the mRNA of FGFR2. Regulates splicing and expression of genes involved in inner ear development, auditory hair cell differentiation, and cell fate specification in the cochlear epithelium. In Homo sapiens (Human), this protein is Epithelial splicing regulatory protein 1 (ESRP1).